Consider the following 943-residue polypeptide: Isoleucine--tRNA ligase (943 aa).

A 'HIGH' region motif is present at residues Pro58–His68. Position 567 (Glu567) interacts with L-isoleucyl-5'-AMP. A 'KMSKS' region motif is present at residues Lys608–Ser612. Lys611 contributes to the ATP binding site. Zn(2+)-binding residues include Cys906, Cys909, Cys926, and Cys929.

Belongs to the class-I aminoacyl-tRNA synthetase family. IleS type 1 subfamily. In terms of assembly, monomer. The cofactor is Zn(2+).

It is found in the cytoplasm. The catalysed reaction is tRNA(Ile) + L-isoleucine + ATP = L-isoleucyl-tRNA(Ile) + AMP + diphosphate. Functionally, catalyzes the attachment of isoleucine to tRNA(Ile). As IleRS can inadvertently accommodate and process structurally similar amino acids such as valine, to avoid such errors it has two additional distinct tRNA(Ile)-dependent editing activities. One activity is designated as 'pretransfer' editing and involves the hydrolysis of activated Val-AMP. The other activity is designated 'posttransfer' editing and involves deacylation of mischarged Val-tRNA(Ile). The polypeptide is Isoleucine--tRNA ligase (Pseudomonas putida (strain GB-1)).